The following is a 614-amino-acid chain: Vitamin B12 transporter BtuB (614 aa).

The N-terminal stretch at 1-20 (MIKKASLLTACSVTAFSAWA) is a signal peptide. A TonB box motif is present at residues 26 to 33 (DTLVVTAN). Positions 38-152 (PRSTVLAPTT…IGGVVNIITT (115 aa)) constitute a TBDR plug domain. Residues L83, S85, N92, and 110 to 111 (VS) each bind cyanocob(III)alamin. One can recognise a TBDR beta-barrel domain in the interval 155-614 (EPGTEISAGW…EYTLSGSYTF (460 aa)). Transmembrane regions (beta stranded) follow at residues 158 to 165 (TEISAGWG), 169 to 178 (YQNYDVSTQQ), and 184 to 195 (TRVTLLGDYAHT). Ca(2+) contacts are provided by D199, Q211, D213, and D215. 2 consecutive transmembrane segments (beta stranded) span residues 217 to 227 (FLSKTLYGALE) and 232 to 248 (DAWS…NRTN). The Ca(2+) site is built by Y249 and D250. A251 lines the cyanocob(III)alamin pocket. Position 261 (D261) interacts with Ca(2+). The next 14 beta stranded transmembrane spans lie at 263–277 (RKLY…LRYN), 279–296 (ELIK…KDYN), 309–325 (TLDE…NNII), 328–337 (HGNVGAGVDW), 353–369 (YDQR…QQVG), 371–381 (FTFEGAARSDD), 385–400 (FGRH…WEFI), 403–417 (YRFI…KAPN), 434–443 (KSKQWEGAFE), 449–458 (VNWRISGYRN), 473–490 (YYNE…TANF), 494–509 (PLTH…ARNA), 517–529 (RRAK…QLDW), and 535–550 (DWGI…YDKD). T309 provides a ligand contact to cyanocob(III)alamin. R517 serves as a coordination point for cyanocob(III)alamin. Residue Y551 coordinates cyanocob(III)alamin. Transmembrane regions (beta stranded) follow at residues 558–572 (TVKM…LAVA), 585–596 (IANLFDKDYETV), and 602–614 (AGRE…SYTF). The short motif at 597–614 (YGYQTAGREYTLSGSYTF) is the TonB C-terminal box element.

It belongs to the TonB-dependent receptor family. BtuB (TC 1.B.14.3.1) subfamily.

It localises to the cell outer membrane. In terms of biological role, involved in the active translocation of vitamin B12 (cyanocobalamin) across the outer membrane to the periplasmic space. It derives its energy for transport by interacting with the trans-periplasmic membrane protein TonB. The chain is Vitamin B12 transporter BtuB from Shigella dysenteriae serotype 1 (strain Sd197).